A 163-amino-acid polypeptide reads, in one-letter code: Nucleotide-binding protein RER_17110 (163 aa).

Belongs to the YajQ family.

Its function is as follows. Nucleotide-binding protein. In Rhodococcus erythropolis (strain PR4 / NBRC 100887), this protein is Nucleotide-binding protein RER_17110.